The following is a 201-amino-acid chain: ATP-dependent Clp protease proteolytic subunit 2 (201 aa).

Ser98 (nucleophile) is an active-site residue. His123 is a catalytic residue.

Belongs to the peptidase S14 family. In terms of assembly, fourteen ClpP subunits assemble into 2 heptameric rings which stack back to back to give a disk-like structure with a central cavity, resembling the structure of eukaryotic proteasomes.

The protein resides in the cytoplasm. It carries out the reaction Hydrolysis of proteins to small peptides in the presence of ATP and magnesium. alpha-casein is the usual test substrate. In the absence of ATP, only oligopeptides shorter than five residues are hydrolyzed (such as succinyl-Leu-Tyr-|-NHMec, and Leu-Tyr-Leu-|-Tyr-Trp, in which cleavage of the -Tyr-|-Leu- and -Tyr-|-Trp bonds also occurs).. Cleaves peptides in various proteins in a process that requires ATP hydrolysis. Has a chymotrypsin-like activity. Plays a major role in the degradation of misfolded proteins. This is ATP-dependent Clp protease proteolytic subunit 2 from Pseudomonas aeruginosa (strain ATCC 15692 / DSM 22644 / CIP 104116 / JCM 14847 / LMG 12228 / 1C / PRS 101 / PAO1).